We begin with the raw amino-acid sequence, 211 residues long: Imidazole glycerol phosphate synthase subunit HisH (211 aa).

Residues V3 to A211 form the Glutamine amidotransferase type-1 domain. C81 functions as the Nucleophile in the catalytic mechanism. Catalysis depends on residues H186 and E188.

Heterodimer of HisH and HisF.

It localises to the cytoplasm. It carries out the reaction 5-[(5-phospho-1-deoxy-D-ribulos-1-ylimino)methylamino]-1-(5-phospho-beta-D-ribosyl)imidazole-4-carboxamide + L-glutamine = D-erythro-1-(imidazol-4-yl)glycerol 3-phosphate + 5-amino-1-(5-phospho-beta-D-ribosyl)imidazole-4-carboxamide + L-glutamate + H(+). It catalyses the reaction L-glutamine + H2O = L-glutamate + NH4(+). Its pathway is amino-acid biosynthesis; L-histidine biosynthesis; L-histidine from 5-phospho-alpha-D-ribose 1-diphosphate: step 5/9. Functionally, IGPS catalyzes the conversion of PRFAR and glutamine to IGP, AICAR and glutamate. The HisH subunit catalyzes the hydrolysis of glutamine to glutamate and ammonia as part of the synthesis of IGP and AICAR. The resulting ammonia molecule is channeled to the active site of HisF. In Gloeothece citriformis (strain PCC 7424) (Cyanothece sp. (strain PCC 7424)), this protein is Imidazole glycerol phosphate synthase subunit HisH.